The following is a 173-amino-acid chain: Peptide methionine sulfoxide reductase MsrA (173 aa).

Residue Cys10 is part of the active site.

It belongs to the MsrA Met sulfoxide reductase family.

The enzyme catalyses L-methionyl-[protein] + [thioredoxin]-disulfide + H2O = L-methionyl-(S)-S-oxide-[protein] + [thioredoxin]-dithiol. It catalyses the reaction [thioredoxin]-disulfide + L-methionine + H2O = L-methionine (S)-S-oxide + [thioredoxin]-dithiol. Has an important function as a repair enzyme for proteins that have been inactivated by oxidation. Catalyzes the reversible oxidation-reduction of methionine sulfoxide in proteins to methionine. This chain is Peptide methionine sulfoxide reductase MsrA, found in Psychrobacter cryohalolentis (strain ATCC BAA-1226 / DSM 17306 / VKM B-2378 / K5).